An 89-amino-acid chain; its full sequence is UPF0297 protein SMU_2079c (89 aa).

It belongs to the UPF0297 family.

The sequence is that of UPF0297 protein SMU_2079c from Streptococcus mutans serotype c (strain ATCC 700610 / UA159).